Consider the following 74-residue polypeptide: ATP synthase subunit c (74 aa).

Helical transmembrane passes span 9 to 29 (IAIA…ASIF) and 51 to 71 (LIGA…AILL).

Belongs to the ATPase C chain family. As to quaternary structure, F-type ATPases have 2 components, F(1) - the catalytic core - and F(0) - the membrane proton channel. F(1) has five subunits: alpha(3), beta(3), gamma(1), delta(1), epsilon(1). F(0) has three main subunits: a(1), b(2) and c(10-14). The alpha and beta chains form an alternating ring which encloses part of the gamma chain. F(1) is attached to F(0) by a central stalk formed by the gamma and epsilon chains, while a peripheral stalk is formed by the delta and b chains.

The protein resides in the cell inner membrane. Its function is as follows. F(1)F(0) ATP synthase produces ATP from ADP in the presence of a proton or sodium gradient. F-type ATPases consist of two structural domains, F(1) containing the extramembraneous catalytic core and F(0) containing the membrane proton channel, linked together by a central stalk and a peripheral stalk. During catalysis, ATP synthesis in the catalytic domain of F(1) is coupled via a rotary mechanism of the central stalk subunits to proton translocation. In terms of biological role, key component of the F(0) channel; it plays a direct role in translocation across the membrane. A homomeric c-ring of between 10-14 subunits forms the central stalk rotor element with the F(1) delta and epsilon subunits. This chain is ATP synthase subunit c, found in Orientia tsutsugamushi (strain Ikeda) (Rickettsia tsutsugamushi).